Here is a 361-residue protein sequence, read N- to C-terminus: Histidinol-phosphate aminotransferase (361 aa).

The residue at position 219 (Lys219) is an N6-(pyridoxal phosphate)lysine.

The protein belongs to the class-II pyridoxal-phosphate-dependent aminotransferase family. Histidinol-phosphate aminotransferase subfamily. As to quaternary structure, homodimer. The cofactor is pyridoxal 5'-phosphate.

It carries out the reaction L-histidinol phosphate + 2-oxoglutarate = 3-(imidazol-4-yl)-2-oxopropyl phosphate + L-glutamate. Its pathway is amino-acid biosynthesis; L-histidine biosynthesis; L-histidine from 5-phospho-alpha-D-ribose 1-diphosphate: step 7/9. The sequence is that of Histidinol-phosphate aminotransferase from Cereibacter sphaeroides (strain KD131 / KCTC 12085) (Rhodobacter sphaeroides).